The following is a 575-amino-acid chain: FAD-linked oxidoreductase asqF (575 aa).

An N-terminal signal peptide occupies residues 1-23; sequence MALFRLSAAIVVIFLYIWSPSQR. N-linked (GlcNAc...) asparagine glycosylation is found at N45 and N80. In terms of domain architecture, FAD-binding PCMH-type spans 118 to 306; the sequence is NQGRIPLYAA…VRVTMRTYPD (189 aa). H156 carries the post-translational modification Pros-8alpha-FAD histidine. A glycan (N-linked (GlcNAc...) asparagine) is linked at N370.

This sequence belongs to the oxygen-dependent FAD-linked oxidoreductase family. The cofactor is FAD.

The enzyme catalyses peniprequinolone + A = yaequinolone E + AH2. It participates in secondary metabolite biosynthesis. Its pathway is alkaloid biosynthesis. It functions in the pathway mycotoxin biosynthesis. In terms of biological role, FAD-linked oxidoreductase; part of the gene cluster that mediates the biosynthesis of the aspoquinolone mycotoxins. Within the pathway, asqF performs FAD-dependent dehydrogenation of the dimethylallyl quinolone peniprequinolone to yield the conjugated aryl diene yaequinolone E. The first step of the pathway is catalyzed by the nonribosomal peptide synthetase asqK that condenses anthranilic acid and O-methyl-L-tyrosine to produce 4'-methoxycyclopeptin. 4'-methoxycyclopeptin is then converted to 4'-methoxydehydrocyclopeptin by the ketoglutarate-dependent dioxygenase asqJ. AsqJ also converts its first product 4'-methoxydehydrocyclopeptin to 4'-methoxycyclopenin. The following conversion of 4'-methoxycyclopenin into 4'-methoxyviridicatin is catalyzed by the cyclopenase asqI. 4'-methoxyviridicatin is the precursor of quinolone natural products, and is further converted to quinolinone B. The prenyltransferase asqH1 then catalyzes the canonical Friedel-Crafts alkylation of quinolinone B with dimethylallyl cation to yield dimethylallyl quinolone, which is subjected to FAD-dependent dehydrogenation by the FAD-linked oxidoreductase asqF to yield conjugated aryl diene. The delta(3') double bond then serves as the site of the second alkylation with DMAPP catalyzed by the prenyltransferase asqH2 to yield a carbenium ion intermediate, which can be attacked by H(2)O to yield a styrenyl quinolone containing a C3'-hydroxyprenyl chain. The FAD-dependent monooxygenase asqG performs epoxidation of the terminal C7'-C8' olefin. Finally, after dehydratation of the epoxide at C3 by asqC, the quinolone epoxide rearrangement protein asqO catalyzes an enzymatic 3-exo-tet cyclization to yield the cyclopropyl-THF ring system in aspoquinolone. The protein is FAD-linked oxidoreductase asqF of Emericella nidulans (strain FGSC A4 / ATCC 38163 / CBS 112.46 / NRRL 194 / M139) (Aspergillus nidulans).